The sequence spans 350 residues: Nuclear pore complex-interacting protein family member A3 (350 aa).

Positions 306 to 325 are disordered; it reads KTPPECLLTPLPPSAPPSVD.

This sequence belongs to the NPIP family.

The protein is Nuclear pore complex-interacting protein family member A3 (NPIPA3) of Homo sapiens (Human).